The sequence spans 391 residues: Dual-specificity RNA methyltransferase RlmN (391 aa).

Positions Met1 to Ile20 are disordered. A compositionally biased stretch (basic and acidic residues) spans Thr10–Ile20. Glu120 acts as the Proton acceptor in catalysis. Positions Asp126 to Asp366 constitute a Radical SAM core domain. A disulfide bridge links Cys133 with Cys371. [4Fe-4S] cluster is bound by residues Cys140, Cys144, and Cys147. S-adenosyl-L-methionine is bound by residues Gly195 to Glu196, Ser227, Ser249 to His251, and Asn328. Residue Cys371 is the S-methylcysteine intermediate of the active site.

This sequence belongs to the radical SAM superfamily. RlmN family. [4Fe-4S] cluster serves as cofactor.

Its subcellular location is the cytoplasm. It catalyses the reaction adenosine(2503) in 23S rRNA + 2 reduced [2Fe-2S]-[ferredoxin] + 2 S-adenosyl-L-methionine = 2-methyladenosine(2503) in 23S rRNA + 5'-deoxyadenosine + L-methionine + 2 oxidized [2Fe-2S]-[ferredoxin] + S-adenosyl-L-homocysteine. The catalysed reaction is adenosine(37) in tRNA + 2 reduced [2Fe-2S]-[ferredoxin] + 2 S-adenosyl-L-methionine = 2-methyladenosine(37) in tRNA + 5'-deoxyadenosine + L-methionine + 2 oxidized [2Fe-2S]-[ferredoxin] + S-adenosyl-L-homocysteine. In terms of biological role, specifically methylates position 2 of adenine 2503 in 23S rRNA and position 2 of adenine 37 in tRNAs. m2A2503 modification seems to play a crucial role in the proofreading step occurring at the peptidyl transferase center and thus would serve to optimize ribosomal fidelity. In Zymomonas mobilis subsp. mobilis (strain ATCC 31821 / ZM4 / CP4), this protein is Dual-specificity RNA methyltransferase RlmN.